The sequence spans 888 residues: Inactive deaminase YJL070C (888 aa).

A disordered region spans residues 1–42; the sequence is MQAVERRPSLLFDEYQNSVTKPNETKNKEARVLSENDGDVSP. The residue at position 9 (Ser-9) is a Phosphoserine. Over residues 23 to 34 the composition is skewed to basic and acidic residues; it reads NETKNKEARVLS. 3 positions are modified to phosphoserine: Ser-41, Ser-178, and Ser-180.

The protein belongs to the metallo-dependent hydrolases superfamily. Adenosine and AMP deaminases family.

The chain is Inactive deaminase YJL070C from Saccharomyces cerevisiae (strain ATCC 204508 / S288c) (Baker's yeast).